The sequence spans 216 residues: uncharacterized protein (216 aa).

The next 6 helical transmembrane spans lie at 12–32 (YVLG…FVLA), 48–68 (GVFL…ASLL), 74–94 (LFIG…VGML), 134–154 (ILFF…YPGL), 156–176 (FLVL…FLIF), and 191–211 (LAAG…VKLA).

It belongs to the Rht family.

The protein localises to the cell membrane. This is an uncharacterized protein from Pseudomonas aeruginosa (strain ATCC 15692 / DSM 22644 / CIP 104116 / JCM 14847 / LMG 12228 / 1C / PRS 101 / PAO1).